Reading from the N-terminus, the 505-residue chain is ATP synthase subunit beta (505 aa).

157–164 (GGAGVGKT) contributes to the ATP binding site.

This sequence belongs to the ATPase alpha/beta chains family. As to quaternary structure, F-type ATPases have 2 components, CF(1) - the catalytic core - and CF(0) - the membrane proton channel. CF(1) has five subunits: alpha(3), beta(3), gamma(1), delta(1), epsilon(1). CF(0) has three main subunits: a(1), b(2) and c(9-12). The alpha and beta chains form an alternating ring which encloses part of the gamma chain. CF(1) is attached to CF(0) by a central stalk formed by the gamma and epsilon chains, while a peripheral stalk is formed by the delta and b chains.

Its subcellular location is the cell inner membrane. It carries out the reaction ATP + H2O + 4 H(+)(in) = ADP + phosphate + 5 H(+)(out). In terms of biological role, produces ATP from ADP in the presence of a proton gradient across the membrane. The catalytic sites are hosted primarily by the beta subunits. This chain is ATP synthase subunit beta, found in Bacteroides thetaiotaomicron (strain ATCC 29148 / DSM 2079 / JCM 5827 / CCUG 10774 / NCTC 10582 / VPI-5482 / E50).